The chain runs to 156 residues: Small ribosomal subunit protein uS7c (156 aa).

Belongs to the universal ribosomal protein uS7 family. Part of the 30S ribosomal subunit.

The protein resides in the plastid. It is found in the chloroplast. In terms of biological role, one of the primary rRNA binding proteins, it binds directly to 16S rRNA where it nucleates assembly of the head domain of the 30S subunit. The protein is Small ribosomal subunit protein uS7c (rps7) of Phaeodactylum tricornutum (strain CCAP 1055/1).